Consider the following 196-residue polypeptide: Probable GTP-binding protein EngB (196 aa).

In terms of domain architecture, EngB-type G spans 22 to 195 (NIPEIALVGR…WQWIEERMGK (174 aa)). GTP-binding positions include 30-37 (GRSNVGKS), 57-61 (GKTQT), 75-78 (DVPG), 142-145 (TKID), and 174-176 (FSA). Mg(2+)-binding residues include Ser-37 and Thr-59.

The protein belongs to the TRAFAC class TrmE-Era-EngA-EngB-Septin-like GTPase superfamily. EngB GTPase family. Mg(2+) is required as a cofactor.

Its function is as follows. Necessary for normal cell division and for the maintenance of normal septation. The sequence is that of Probable GTP-binding protein EngB from Limosilactobacillus reuteri (strain DSM 20016) (Lactobacillus reuteri).